The primary structure comprises 37 residues: Large ribosomal subunit protein bL36 (37 aa).

This sequence belongs to the bacterial ribosomal protein bL36 family.

The sequence is that of Large ribosomal subunit protein bL36 from Rippkaea orientalis (strain PCC 8801 / RF-1) (Cyanothece sp. (strain PCC 8801)).